The following is a 1037-amino-acid chain: Presequence protease, mitochondrial (1037 aa).

The transit peptide at 1 to 28 (MWRCGGRQGLCVLRRLSGGHAHHRAWRW) directs the protein to the mitochondrion. H104 is a binding site for Zn(2+). Residue E107 is the Proton acceptor of the active site. Zn(2+) is bound at residue H108. C119 and C556 are disulfide-bonded. E180 is a catalytic residue. E205 lines the Zn(2+) pocket. The residue at position 759 (K759) is an N6-acetyllysine. At K770 the chain carries N6-acetyllysine; alternate. An N6-succinyllysine; alternate modification is found at K770. A compositionally biased stretch (basic residues) spans 804–814 (GRSKKERRPVR). A disordered region spans residues 804–834 (GRSKKERRPVRPHTVEKPVPSSSGGDAHVPH). Position 849 is an N6-succinyllysine (K849). K884 bears the N6-acetyllysine mark. Position 946 is an N6-succinyllysine (K946).

The protein belongs to the peptidase M16 family. PreP subfamily. As to quaternary structure, monomer and homodimer; homodimerization is induced by binding of the substrate. The cofactor is Zn(2+). A disulfide bond locks the enzyme in the closed conformation preventing substrate entry into the catalytic chamber. Widely expressed. Expressed at higher level in muscle and heart compared to brain, pancreas, liver, lung and placenta.

It localises to the mitochondrion. The protein localises to the mitochondrion matrix. Its activity is regulated as follows. Mainly exists in a closed and catalytically competent conformation but a closed-to-open switch allows substrate entry into the catalytic chamber. Substrate binding induces closure and dimerization. A disulfide bond may lock the enzyme in a closed conformation preventing substrate entry into the catalytic chamber, participating in redox regulation of the enzyme. Inhibited by metal-chelating agents. Inhibited by nickel and zinc excess, and slightly activated by manganese. Metalloendopeptidase of the mitochondrial matrix that functions in peptide cleavage and degradation rather than in protein processing. Has an ATP-independent activity. Specifically cleaves peptides in the range of 5 to 65 residues. Shows a preference for cleavage after small polar residues and before basic residues, but without any positional preference. Degrades the transit peptides of mitochondrial proteins after their cleavage. Also degrades other unstructured peptides. It is also able to degrade amyloid-beta protein 40, one of the peptides produced by APP processing, when it accumulates in mitochondrion. It is a highly efficient protease, at least toward amyloid-beta protein 40. Cleaves that peptide at a specific position and is probably not processive, releasing digested peptides intermediates that can be further cleaved subsequently. It is also able to degrade amyloid-beta protein 42. In Homo sapiens (Human), this protein is Presequence protease, mitochondrial.